The sequence spans 316 residues: MTAADWRRTLNPQEQREVRELVGAATEFDAVAPVGEQVLRELGHDRTEHLLIRGSVSGGAADAVVGYLNLTPPRDAQPQMAELVVHPRARRRGIGSALARAALAKTGAANRFWAHGTLEPARATAAALGLSPVRELMQMRRSLRDLPDSVPAVPGVRIRTYAGPADDAELLRVNNAAFAYHPEQGGWTDVELAERRAEPWFDPAGLFLAFGDDDSDRPGRLLGFHWTKVHLDQPGLGEVYVVGVDPCAQGRGLGQALTAVGIEWLARRLGAGDSAADPTVMLYVEADNVAAVRTYQRLGFTTYSVDTAYAVPPAAN.

N-acetyltransferase domains follow at residues 16–153 and 156–316; these read REVR…VPAV and VRIR…PAAN. Glu36 contributes to the 1D-myo-inositol 2-(L-cysteinylamino)-2-deoxy-alpha-D-glucopyranoside binding site. Acetyl-CoA is bound by residues 83–85 and 91–96; these read LVV and RRGIGS. Glu183, Lys228, and Glu238 together coordinate 1D-myo-inositol 2-(L-cysteinylamino)-2-deoxy-alpha-D-glucopyranoside. Acetyl-CoA contacts are provided by residues 242–244 and 249–255; these read VGV and QGRGLGQ. 1D-myo-inositol 2-(L-cysteinylamino)-2-deoxy-alpha-D-glucopyranoside is bound at residue Tyr283. 288–293 contacts acetyl-CoA; sequence NVAAVR.

This sequence belongs to the acetyltransferase family. MshD subfamily. As to quaternary structure, monomer.

The catalysed reaction is 1D-myo-inositol 2-(L-cysteinylamino)-2-deoxy-alpha-D-glucopyranoside + acetyl-CoA = mycothiol + CoA + H(+). Functionally, catalyzes the transfer of acetyl from acetyl-CoA to desacetylmycothiol (Cys-GlcN-Ins) to form mycothiol. The chain is Mycothiol acetyltransferase from Mycolicibacterium paratuberculosis (strain ATCC BAA-968 / K-10) (Mycobacterium paratuberculosis).